Consider the following 156-residue polypeptide: 6,7-dimethyl-8-ribityllumazine synthase (156 aa).

Residues Phe28, 62 to 64 (ALE), and 86 to 88 (AVI) each bind 5-amino-6-(D-ribitylamino)uracil. Residue 91–92 (ET) participates in (2S)-2-hydroxy-3-oxobutyl phosphate binding. His94 serves as the catalytic Proton donor. Asn119 contacts 5-amino-6-(D-ribitylamino)uracil. (2S)-2-hydroxy-3-oxobutyl phosphate is bound at residue Arg133.

The protein belongs to the DMRL synthase family.

The catalysed reaction is (2S)-2-hydroxy-3-oxobutyl phosphate + 5-amino-6-(D-ribitylamino)uracil = 6,7-dimethyl-8-(1-D-ribityl)lumazine + phosphate + 2 H2O + H(+). The protein operates within cofactor biosynthesis; riboflavin biosynthesis; riboflavin from 2-hydroxy-3-oxobutyl phosphate and 5-amino-6-(D-ribitylamino)uracil: step 1/2. In terms of biological role, catalyzes the formation of 6,7-dimethyl-8-ribityllumazine by condensation of 5-amino-6-(D-ribitylamino)uracil with 3,4-dihydroxy-2-butanone 4-phosphate. This is the penultimate step in the biosynthesis of riboflavin. The chain is 6,7-dimethyl-8-ribityllumazine synthase from Azoarcus sp. (strain BH72).